Here is a 234-residue protein sequence, read N- to C-terminus: RNA-binding protein pno1 (234 aa).

A disordered region spans residues 1 to 39 (MPTQDSAAKQADDGFQLVQKKSRKRKMTMDMDDADPKAG). In terms of domain architecture, KH spans 158–207 (LARCIGRLAGKGGRTKFTIENVTKTRIVLADSKVHILGSYQNIRAARTAL).

It belongs to the PNO1 family.

Its subcellular location is the nucleus. The protein resides in the nucleolus. The sequence is that of RNA-binding protein pno1 from Ixodes scapularis (Black-legged tick).